A 64-amino-acid chain; its full sequence is Large ribosomal subunit protein bL35 (64 aa).

A disordered region spans residues 1–43 (MPKMKSKKSLAKRVIAKKNGTLKRGKAYRSHRATGKTTKQKRH).

The protein belongs to the bacterial ribosomal protein bL35 family.

This chain is Large ribosomal subunit protein bL35, found in Mesoplasma florum (strain ATCC 33453 / NBRC 100688 / NCTC 11704 / L1) (Acholeplasma florum).